The sequence spans 115 residues: T cell receptor beta variable 7-2 (115 aa).

The N-terminal stretch at 1–21 (MGTRLLFWVAFCLLGADHTGA) is a signal peptide. One can recognise an Ig-like domain in the interval 22–115 (GVSQSPSNKV…SAVYLCASSL (94 aa)). Cysteines 42 and 111 form a disulfide.

As to quaternary structure, alpha-beta TR is a heterodimer composed of an alpha and beta chain; disulfide-linked. The alpha-beta TR is associated with the transmembrane signaling CD3 coreceptor proteins to form the TR-CD3 (TcR or TCR). The assembly of alpha-beta TR heterodimers with CD3 occurs in the endoplasmic reticulum where a single alpha-beta TR heterodimer associates with one CD3D-CD3E heterodimer, one CD3G-CD3E heterodimer and one CD247 homodimer forming a stable octameric structure. CD3D-CD3E and CD3G-CD3E heterodimers preferentially associate with TR alpha and TR beta chains, respectively. The association of the CD247 homodimer is the last step of TcR assembly in the endoplasmic reticulum and is required for transport to the cell surface.

The protein resides in the cell membrane. In terms of biological role, v region of the variable domain of T cell receptor (TR) beta chain that participates in the antigen recognition. Alpha-beta T cell receptors are antigen specific receptors which are essential to the immune response and are present on the cell surface of T lymphocytes. Recognize peptide-major histocompatibility (MH) (pMH) complexes that are displayed by antigen presenting cells (APC), a prerequisite for efficient T cell adaptive immunity against pathogens. Binding of alpha-beta TR to pMH complex initiates TR-CD3 clustering on the cell surface and intracellular activation of LCK that phosphorylates the ITAM motifs of CD3G, CD3D, CD3E and CD247 enabling the recruitment of ZAP70. In turn ZAP70 phosphorylates LAT, which recruits numerous signaling molecules to form the LAT signalosome. The LAT signalosome propagates signal branching to three major signaling pathways, the calcium, the mitogen-activated protein kinase (MAPK) kinase and the nuclear factor NF-kappa-B (NF-kB) pathways, leading to the mobilization of transcription factors that are critical for gene expression and essential for T cell growth and differentiation. The T cell repertoire is generated in the thymus, by V-(D)-J rearrangement. This repertoire is then shaped by intrathymic selection events to generate a peripheral T cell pool of self-MH restricted, non-autoaggressive T cells. Post-thymic interaction of alpha-beta TR with the pMH complexes shapes TR structural and functional avidity. The sequence is that of T cell receptor beta variable 7-2 from Homo sapiens (Human).